We begin with the raw amino-acid sequence, 931 residues long: Elicitor of plant defense protein 1 (931 aa).

Positions 13-32 are disordered; it reads NYNSVIPPPEPLNTDPDMHP. The 259-residue stretch at 19–277 folds into the uDENN domain; that stretch reads PPPEPLNTDP…NLCTEAFNPL (259 aa). The region spanning 301-433 is the cDENN domain; the sequence is EIPGSRSIDL…ARRKLMSLLQ (133 aa). Residues 435-799 enclose the dDENN domain; that stretch reads AAPHKLRYGV…DREMQPANNA (365 aa). Disordered stretches follow at residues 478–552 and 566–586; these read LGKW…SRSD and SGHFGEEKMRRSSSFGIDKHP. Residues 521–537 show a composition bias toward polar residues; the sequence is TSKSGKTSPQSSVSPVS. A compositionally biased stretch (basic and acidic residues) spans 566–575; the sequence is SGHFGEEKMR. The Phorbol-ester/DAG-type zinc finger occupies 666–714; that stretch reads GHCFNWIPKDNTSICNICNDHAEGDGIYKCTGCKIFSHGRCLGHASLVC.

This sequence belongs to the EPD1 elicitor family.

It is found in the secreted. The protein localises to the host cell. Its function is as follows. Acts as an elicitor that triggers cell death and defense responses in the host plants. The polypeptide is Elicitor of plant defense protein 1 (Fusarium odoratissimum (strain NRRL 54006)).